We begin with the raw amino-acid sequence, 504 residues long: L-carnitine/gamma-butyrobetaine antiporter (504 aa).

Helical transmembrane passes span 8-28 (AGIEPKVFFPPLIIVGILCWL), 51-71 (WGWAFEWYMVIMFGGWFWLVF), 92-112 (IFMMFASCTSAAVLFWGSIEI), 143-163 (GPLPWATYSFLSVAFAYFFFV), 195-215 (FYLVALILAMGTSLGLATPLV), 231-251 (LDAIIISCWILLNAICVAFGL), 263-283 (TYLSFLMLGWVFIVGGASFIV), 315-335 (AWTVFYWAWWVIYAIQMSIFL), 347-367 (LCLGMVSGLTAGTWLIWTYSG), 403-423 (LSTATMWGFFILCFIATVTLI), 446-466 (LLVRIGWSVLVGIIGIILLAL), and 475-495 (AIIAGGCPLFFVNIMVTLSFI).

This sequence belongs to the BCCT transporter (TC 2.A.15) family. CaiT subfamily. Homotrimer.

It is found in the cell inner membrane. The catalysed reaction is 4-(trimethylamino)butanoate(in) + (R)-carnitine(out) = 4-(trimethylamino)butanoate(out) + (R)-carnitine(in). It functions in the pathway amine and polyamine metabolism; carnitine metabolism. In terms of biological role, catalyzes the exchange of L-carnitine for gamma-butyrobetaine. This is L-carnitine/gamma-butyrobetaine antiporter from Proteus sp. (strain LE138).